A 172-amino-acid chain; its full sequence is Shikimate kinase (172 aa).

ATP is bound at residue 14–19 (GAGKST). Ser18 serves as a coordination point for Mg(2+). Positions 36, 60, and 82 each coordinate substrate. Arg120 provides a ligand contact to ATP. Arg140 serves as a coordination point for substrate. Gln157 is a binding site for ATP.

This sequence belongs to the shikimate kinase family. As to quaternary structure, monomer. Mg(2+) serves as cofactor.

Its subcellular location is the cytoplasm. It carries out the reaction shikimate + ATP = 3-phosphoshikimate + ADP + H(+). It functions in the pathway metabolic intermediate biosynthesis; chorismate biosynthesis; chorismate from D-erythrose 4-phosphate and phosphoenolpyruvate: step 5/7. Functionally, catalyzes the specific phosphorylation of the 3-hydroxyl group of shikimic acid using ATP as a cosubstrate. In Aeromonas salmonicida (strain A449), this protein is Shikimate kinase.